The primary structure comprises 989 residues: Autotransporter adhesin/invasin TibA (989 aa).

Positions 1–54 are cleaved as a signal peptide; the sequence is MNKVYNTVWNESTGTWVVTSELTRKGGLRPRQIKRTVLAGLIAGLLMPSMPALA. 14 O-alpha-linked (D-glycero-D-manno-heptose) serine glycosylation sites follow: Ser74, Ser86, Ser93, Ser94, Ser97, Ser100, Ser112, Ser113, Ser116, Ser119, Ser124, Ser131, Ser132, and Ser135. Repeat copies occupy residues 82-100, 101-119, 120-138, 139-157, 158-176, 177-195, 196-214, 215-233, 234-251, 252-270, 271-289, and 290-308. The segment at 82–308 is 12 X 19 AA approximate repeats; that stretch reads TTINSGGKQY…QVEAGGSASK (227 aa). Polar residues predominate over residues 110-123; sequence HVSSGGSATSSTIN. Residues 110–146 are disordered; it reads HVSSGGSATSSTINSGGHQHVSSGGSATNTTVNNGGR. Residues 124-135 show a composition bias toward low complexity; that stretch reads SGGHQHVSSGGS. The span at 136–146 shows a compositional bias: polar residues; it reads ATNTTVNNGGR. Ser151, Ser154, Ser162, Ser170, Ser176, Ser181, Ser188, Ser189, Ser200, Ser226, Ser227, Ser230, Ser238, Ser248, Ser263, Ser264, Ser275, Ser294, Ser305, Ser313, and Ser322 each carry an O-alpha-linked (D-glycero-D-manno-heptose) serine glycan. Positions 623–686 are disordered; sequence WYLKADTPPP…GTSSSPVRRT (64 aa). The segment covering 629 to 638 has biased composition (pro residues); the sequence is TPPPVTPPTN. 8 tandem repeats follow at residues 639–643, 644–648, 649–653, 654–658, 659–663, 664–668, 669–673, and 674–678. A compositionally biased stretch (low complexity) spans 639 to 667; the sequence is PDADNPDAGNPDAGNPDAGNPDAGNPDAG. The segment at 639-678 is 8 X 5 AA repeats of P-[DG]-[AGT]-[DGA]-[NKT]; that stretch reads PDADNPDAGNPDAGNPDAGNPDAGNPDAGKPGTGKPDAGT. One can recognise an Autotransporter domain in the interval 721–989; sequence NTRAPGGVWG…TGGVGFRINF (269 aa).

As to quaternary structure, homohexamer. Post-translationally, glycosylated by TibC. Glycosylation is required for adhesion to and invasion of host cells. Glycosylation is dispensable for bacterial autoaggregation and biofilm formation.

The protein resides in the cell outer membrane. Its function is as follows. Mediates both adhesion to and invasion of human intestine epithelial cells. Also mediates bacterial cell aggregation via intercellular TibA-TibA interaction. Enhances biofilm formation. This is Autotransporter adhesin/invasin TibA from Escherichia coli O78:H11 (strain H10407 / ETEC).